Reading from the N-terminus, the 108-residue chain is UPF0166 protein MJ1524 (108 aa).

Belongs to the UPF0166 family.

This is UPF0166 protein MJ1524 from Methanocaldococcus jannaschii (strain ATCC 43067 / DSM 2661 / JAL-1 / JCM 10045 / NBRC 100440) (Methanococcus jannaschii).